The primary structure comprises 812 residues: MFSGMSLLLWGVLLGAALSVARPPSTLPDEVAPKTKTEVEPYSAQPGDRITLQCRLREDVQSINWVKNGVQLSETNRTRITGEEIQISNAGPEDNGVYACVTNGPSRTYTVLCSVNVSDALPSAEDDDEDDDNSSSEEKAAENSKPNRPLWSHPEKMEKKLHAVPAAKTVKFRCPANGTPTPTLRWLKNNRAFQQDQRIGGYKVRSQTWSLIMDSVVPSDKGNYTCIVENKYGAINHTYQLDVVERSPHRPILQAGLPANTSVTVGTTAEFSCKVYSDPQPHIQWLRHIEINGSRVASDGFPYVEILKTAGVNTSDKDMEVLHLRNVTFEDAGQYTCLAANSIGISHHSAWLTVLKVEDNKPALLASPLQLEIIIYCTGAAFVSAMVVTIIIFKMKHPSKKSDFNSQLAVHKLAKSIPVRRQVTVSGDSSSSMNSGVILVRRLSSSGTPMLSGLSEYELPEDPRWEVARDRLILGKPLGEGCFGQVVMAEAIGLDKEKPNKVTKVAVKMLKSDASEKDLSDLISEMEMMKMIGKHKNIINLLGACTQDGPLYVIVEYTSKGNLREYLRARRPPAMEYCYNPTCVPDQLLSFKDLVSCAYQVARGMDYLASKKCIHRDLAARNVLVTEDNIMKIADFGLARDIHHIDYYKKTTNGRLPVKWMAPEALFDRIYTHQSDVWSFGVLLWEIFTLGGSPYPGVPMEELFKLLKEGHRMDKPTNCTNELYMMMKDCWHAMPSQRPTFNQLVEDLDRILALSSNQEYLDLSMPVNQYSPCFPDTRSSTCSSGEDSMFSHDPLPDEPCLPKYSNGGLKKR.

An N-terminal signal peptide occupies residues 1–20 (MFSGMSLLLWGVLLGAALSV). At 21–371 (ARPPSTLPDE…PALLASPLQL (351 aa)) the chain is on the extracellular side. One can recognise an Ig-like C2-type 1 domain in the interval 25–118 (STLPDEVAPK…YTVLCSVNVS (94 aa)). Cysteine 54 and cysteine 100 are oxidised to a cystine. N-linked (GlcNAc...) asparagine glycosylation is found at asparagine 76, asparagine 116, asparagine 133, asparagine 223, asparagine 236, asparagine 260, asparagine 292, asparagine 313, and asparagine 326. Residues 121 to 153 (LPSAEDDDEDDDNSSSEEKAAENSKPNRPLWSH) form a disordered region. The span at 124–135 (AEDDDEDDDNSS) shows a compositional bias: acidic residues. 2 Ig-like C2-type domains span residues 154–242 (PEKM…YQLD) and 251–353 (PILQ…AWLT). An intrachain disulfide couples cysteine 174 to cysteine 226. Cysteines 273 and 337 form a disulfide. A helical membrane pass occupies residues 372–393 (EIIIYCTGAAFVSAMVVTIIIF). Over 394-812 (KMKHPSKKSD…KYSNGGLKKR (419 aa)) the chain is Cytoplasmic. Residue tyrosine 457 is modified to Phosphotyrosine; by autocatalysis. Residues 472-761 (LILGKPLGEG…LALSSNQEYL (290 aa)) enclose the Protein kinase domain. Residues 478-484 (LGEGCFG), lysine 508, 556-558 (EYT), and asparagine 562 each bind ATP. Tyrosine 577 and tyrosine 579 each carry phosphotyrosine; by autocatalysis. Aspartate 617 acts as the Proton acceptor in catalysis. Residues arginine 621 and aspartate 635 each contribute to the ATP site. A phosphotyrosine; by autocatalysis mark is found at tyrosine 647, tyrosine 648, tyrosine 724, and tyrosine 760. Positions 784 to 812 (SGEDSMFSHDPLPDEPCLPKYSNGGLKKR) are disordered.

It belongs to the protein kinase superfamily. Tyr protein kinase family. Fibroblast growth factor receptor subfamily. As to quaternary structure, monomer. Homodimer after ligand binding. Interacts with il17rd. In terms of processing, autophosphorylated. Binding of FGF family members together with heparan sulfate proteoglycan or heparin promotes receptor dimerization and autophosphorylation on tyrosine residues. Autophosphorylation occurs in trans between the two FGFR molecules present in the dimer and proceeds in a highly ordered manner. Phosphotyrosine residues provide docking sites for interacting proteins and so are crucial for FGFR1 function and its regulation. Ubiquitinated. FGFR1 is rapidly ubiquitinated after autophosphorylation, leading to internalization and degradation. Post-translationally, N-glycosylated in the endoplasmic reticulum. The N-glycan chains undergo further maturation to an Endo H-resistant form in the Golgi apparatus.

Its subcellular location is the cell membrane. The protein localises to the nucleus. It is found in the cytoplasm. The protein resides in the cytosol. It localises to the cytoplasmic vesicle. The enzyme catalyses L-tyrosyl-[protein] + ATP = O-phospho-L-tyrosyl-[protein] + ADP + H(+). With respect to regulation, present in an inactive conformation in the absence of bound ligand. Ligand binding leads to dimerization and activation by sequential autophosphorylation on tyrosine residues. Its function is as follows. Tyrosine-protein kinase that acts as a cell-surface receptor for fibroblast growth factors and plays an essential role in the regulation of embryonic development, cell proliferation, differentiation and migration. Required for normal mesoderm patterning and normal skeletogenesis. Phosphorylates PLCG1, FRS2, GAB1 and SHB. Ligand binding leads to the activation of several signaling cascades. Activation of PLCG1 leads to the production of the cellular signaling molecules diacylglycerol and inositol-1,4,5-trisphosphate. Phosphorylation of FRS2 triggers recruitment of GRB2, GAB1, PIK3R1 and SOS1, and mediates activation of RAS, MAPK1/ERK2, MAPK3/ERK1 and the MAP kinase signaling pathway, as well as of the AKT1 signaling pathway. Promotes phosphorylation of SHC1, STAT1 and PTPN11/SHP2. In the nucleus, enhances RPS6KA1 and CREB1 activity and contributes to the regulation of transcription. FGFR1 signaling is down-regulated by ubiquitination, internalization and degradation. The chain is Fibroblast growth factor receptor 1 (fgfr1) from Xenopus laevis (African clawed frog).